The sequence spans 168 residues: S-ribosylhomocysteine lyase (168 aa).

His-54, His-58, and Cys-128 together coordinate Fe cation.

This sequence belongs to the LuxS family. As to quaternary structure, homodimer. Fe cation serves as cofactor.

The enzyme catalyses S-(5-deoxy-D-ribos-5-yl)-L-homocysteine = (S)-4,5-dihydroxypentane-2,3-dione + L-homocysteine. Its function is as follows. Involved in the synthesis of autoinducer 2 (AI-2) which is secreted by bacteria and is used to communicate both the cell density and the metabolic potential of the environment. The regulation of gene expression in response to changes in cell density is called quorum sensing. Catalyzes the transformation of S-ribosylhomocysteine (RHC) to homocysteine (HC) and 4,5-dihydroxy-2,3-pentadione (DPD). This Histophilus somni (strain 2336) (Haemophilus somnus) protein is S-ribosylhomocysteine lyase.